Consider the following 221-residue polypeptide: Adenylate kinase (221 aa).

10 to 15 (GAGKGT) serves as a coordination point for ATP. The NMP stretch occupies residues 30–59 (STGDMLRAAVKAGTPLGLEAKRFMDAGELV). AMP contacts are provided by residues Thr31, Arg36, 57 to 59 (ELV), 85 to 88 (GFPR), and Gln92. Residues 122 to 159 (GRRSHAASGRTYHVKFNPPKVEGLDDVTGEPLIQRDDD) are LID. ATP is bound by residues Arg123 and 132 to 133 (TY). AMP-binding residues include Arg156 and Arg167. An ATP-binding site is contributed by Gly207.

The protein belongs to the adenylate kinase family. As to quaternary structure, monomer.

It localises to the cytoplasm. The catalysed reaction is AMP + ATP = 2 ADP. It participates in purine metabolism; AMP biosynthesis via salvage pathway; AMP from ADP: step 1/1. Its function is as follows. Catalyzes the reversible transfer of the terminal phosphate group between ATP and AMP. Plays an important role in cellular energy homeostasis and in adenine nucleotide metabolism. In Paraburkholderia xenovorans (strain LB400), this protein is Adenylate kinase.